The primary structure comprises 1482 residues: Calcium-dependent protein kinase 6 (1482 aa).

2 disordered regions span residues 250–320 (TNNY…IRPN) and 739–760 (SENFSNNFNDNKQKSLKNDDSN). Residues 254 to 264 (AHDNNQDSNSY) show a composition bias toward polar residues. The segment covering 277 to 301 (EEDNDTGDTYADNEEDEDNRDDNDD) has biased composition (acidic residues). The span at 302–318 (YSQYNQCEVESDTNQIR) shows a compositional bias: polar residues. The segment covering 739 to 748 (SENFSNNFND) has biased composition (low complexity). A compositionally biased stretch (basic and acidic residues) spans 749–760 (NKQKSLKNDDSN). 2 EF-hand domains span residues 931-966 (IFERSARATFKQFDVKNKNFLHFSEIESLIQKLCYN) and 972-1007 (VDKKILSIVYKDYDSSKNNCMNYMDFRQMYWDLLKQ). Positions 985, 987, 989, 991, and 996 each coordinate Ca(2+). One can recognise a Protein kinase domain in the interval 1043-1295 (LSFKKILGCG…AAVLLHHPWF (253 aa)). ATP is bound by residues 1049-1057 (LGCGAFGEV) and lysine 1072. The Proton acceptor role is filled by aspartate 1162. EF-hand domains follow at residues 1338–1373 (NHVKYINDIFLKIDSNHNGSLSHREIYNVLSNAGVK), 1376–1406 (DINRIIQALDVNDKGCITYTEFIAGCYRWKN), 1407–1442 (IDSTFLKAAFNKIDKDEDGYISKSDLATLVHDNGVN), and 1468–1482 (KISFEDFKDYMLSTF). Ca(2+)-binding residues include aspartate 1351, asparagine 1353, asparagine 1355, serine 1357, and glutamate 1362. The Ca(2+) site is built by aspartate 1420, aspartate 1422, aspartate 1424, tyrosine 1426, and aspartate 1431.

The protein belongs to the protein kinase superfamily. Ser/Thr protein kinase family. CDPK subfamily. Mg(2+) serves as cofactor.

It carries out the reaction L-seryl-[protein] + ATP = O-phospho-L-seryl-[protein] + ADP + H(+). The enzyme catalyses L-threonyl-[protein] + ATP = O-phospho-L-threonyl-[protein] + ADP + H(+). Activated by calcium. Calcium-dependent protein kinase which acts as a sensor and effector of intracellular Ca(2+) levels. In sporozoites, probably involved in the secretion of the cysteine protease that cleaves circumsporozoite protein CSP, thereby exposing CSP TSR domain, which binds with high affinity to highly sulfated heparan sulfate proteoglycans (HSPGs), resulting in productive invasion of the host hepatocytes. In Plasmodium berghei (strain Anka), this protein is Calcium-dependent protein kinase 6.